The following is a 573-amino-acid chain: FAD-dependent monooxygenase resA (573 aa).

Residues 1–17 form the signal peptide; it reads MYDVIVIGAGWCGLVAA. Residue isoleucine 106 coordinates FAD. Asparagine 235 carries N-linked (GlcNAc...) asparagine glycosylation.

Belongs to the FAD-binding monooxygenase family. The cofactor is FAD.

It participates in antifungal biosynthesis. FAD-dependent monooxygenase; part of the gene cluster that mediates the biosynthesis of the tetrahydropyranyl antifungal agent restricticin that acts as an inhibitor of CYP51 and blocks the ergosterol biosynthesis. The highly reducing polyketide synthase resH, the short chain dehydrogenase resG, the cyclase resF, the FAD-dependent monooxygenase resA and the enoylreductase resD are required to generate the first stable intermediate desmethylrestrictinol. ResH with resD biosynthesize the first polyketide chain intermediate that is reduced by resG, followed by epoxidation by resA before 6-endo cyclization via epoxide opening by resF leads to desmethylrestrictinol. The methyltransferase resE then catalyzes the C4 O-methylation of desmethylrestrictinol to produce restrictinol, and the nonribosomal peptide synthetase resC catalyzes the C3 esterification of restrictinol with glycine that leads to restricticin. The polypeptide is FAD-dependent monooxygenase resA (Aspergillus sclerotiorum).